The chain runs to 408 residues: Lupus La protein (408 aa).

The HTH La-type RNA-binding domain maps to 7–99 (NEKMAALEAK…RRSPSKPLPE (93 aa)). 2 positions are modified to phosphoserine: Ser92 and Ser94. In terms of domain architecture, RRM spans 111-187 (RSVYIKGFPT…TDLLILFKDD (77 aa)). Residue Lys116 is modified to N6-acetyllysine. Thr120 carries the phosphothreonine modification. Lys128 carries the N6-acetyllysine modification. The residue at position 225 (Ser225) is a Phosphoserine. The xRRM domain occupies 227–348 (EEKIGCLLKF…KGKGNKAAQP (122 aa)). N6-acetyllysine is present on residues Lys328, Lys341, and Lys360. Positions 329–342 (WKSKGRRFKGKGKG) are enriched in basic residues. Residues 329–408 (WKSKGRRFKG…QKTENGAGDQ (80 aa)) form a disordered region. Thr362 is subject to Phosphothreonine. Ser366 carries the post-translational modification Phosphoserine; by CK2. The span at 384 to 395 (RAREETDKEEPA) shows a compositional bias: basic and acidic residues.

In terms of assembly, interacts with DDX15. May interact with RUFY1. Post-translationally, phosphorylated. The phosphorylation sites are at the C-terminal part of the protein. In terms of processing, the N-terminus is blocked.

The protein resides in the nucleus. Binds to the 3' poly(U) terminus of nascent RNA polymerase III transcripts, protecting them from exonuclease digestion and facilitating their folding and maturation. In case of Coxsackievirus B3 infection, binds to the viral internal ribosome entry site (IRES) and stimulates the IRES-mediated translation. The polypeptide is Lupus La protein (SSB) (Homo sapiens (Human)).